A 205-amino-acid polypeptide reads, in one-letter code: MASDHQTQAGKPQPLNPKIIIFEQENFQGHSHELSGPCPNLKETGVEKAGSVLVQAGPWVGYEQANCKGEQFVFEKGEYPRWDSWTSSRRTDSLSSLRPIKVDSQEHKIILYENPNFTGKKMEIIDDDVPSFHAHGYQEKVSSVRVQSGTWVGYQYPGYRGLQYLLEKGDYKDSGDFGAPHPQVQSVRRIRDMQWHQRGAFHPSN.

Ala-2 carries the post-translational modification N-acetylalanine. The N-terminal arm stretch occupies residues 2-16; the sequence is ASDHQTQAGKPQPLN. 2 Beta/gamma crystallin 'Greek key' domains span residues 17 to 56 and 57 to 101; these read PKII…LVQA and GPWV…RPIK. The connecting peptide stretch occupies residues 102 to 106; sequence VDSQE. 2 Beta/gamma crystallin 'Greek key' domains span residues 107–148 and 149–191; these read HKII…RVQS and GTWV…RRIR. The interval 193-205 is C-terminal arm; the sequence is MQWHQRGAFHPSN.

It belongs to the beta/gamma-crystallin family. As to quaternary structure, homo/heterodimer, or complexes of higher-order. The structure of beta-crystallin oligomers seems to be stabilized through interactions between the N-terminal arms.

Functionally, crystallins are the dominant structural components of the vertebrate eye lens. This is Beta-crystallin B2 (CRYBB2) from Canis lupus familiaris (Dog).